Consider the following 182-residue polypeptide: uncharacterized protein (182 aa).

Disordered regions lie at residues 1–73 and 105–182; these read MMSG…YRSL and SMST…HLNR. Composition is skewed to low complexity over residues 43–68 and 105–121; these read RPSP…ETSS and SMST…SPVT. Residues 122 to 131 are compositionally biased toward pro residues; that stretch reads APAPPPPPTS.

This is an uncharacterized protein from Caenorhabditis elegans.